We begin with the raw amino-acid sequence, 116 residues long: Alpha-defensin 29 (116 aa).

Positions 1-19 (MKTLVLLSALVLPCFQVQA) are cleaved as a signal peptide. A propeptide spanning residues 20 to 60 (DPIQNTDEETKTEEQPEEEDQAVSVSFGGTEGSALQDVAQR) is cleaved from the precursor. A disordered region spans residues 22 to 44 (IQNTDEETKTEEQPEEEDQAVSV). Tandem repeats lie at residues 65-67 (CRK), 68-70 (CRV), 71-73 (CQK), 74-76 (CQV), 77-79 (CQK), 80-82 (CPV), 83-85 (CPT), 86-88 (CPQ), and 89-91 (CPK). Residues 65-70 (CRKCRV) form a 2 X 3 AA tandem repeats of C-R-X region. A 3 X 3 AA tandem repeats of C-Q-X region spans residues 71–79 (CQKCQVCQK). Positions 80–91 (CPVCPTCPQCPK) are 4 X 3 AA tandem repeats of C-P-X.

The protein belongs to the alpha-defensin family. Small bowel.

It localises to the secreted. Its function is as follows. Apparent precursor of a secreted, cationic, proline- and cysteine-rich peptide that contains Cys-Pro-Xaa repeats. Unlike cryptdin, the proposed mature peptide region lacks the structural motif characteristic of defensins. The chain is Alpha-defensin 29 from Mus musculus (Mouse).